A 520-amino-acid polypeptide reads, in one-letter code: Endosomal/lysosomal proton channel TMEM175 (520 aa).

The disordered stretch occupies residues 1 to 27; the sequence is MGENDESEIIEHHDDEEMEKRRPPRTH. Over 1–49 the chain is Cytoplasmic; sequence MGENDESEIIEHHDDEEMEKRRPPRTHAQSFLESVASSVKEGHSSTQSS. The segment covering 9-21 has biased composition (basic and acidic residues); sequence IIEHHDDEEMEKR. The chain crosses the membrane as a helical span at residues 50–72; it reads HRLLAYSDALISIIATVMILPVA. The RxxxFSD motif 1 motif lies at 51–57; the sequence is RLLAYSD. At 73–93 the chain is on the lumenal side; the sequence is HTKIQEDEELKQSIQALLTTK. The segment at 74–79 is short helix H1-1; that stretch reads TKIQED. Residues 81-87 form a short helix H2-1 region; it reads ELKQSIQ. Residues 94-116 form a helical membrane-spanning segment; it reads IAVYLMTFLIVTVAWAAHIRLFQ. At 117 to 122 the chain is on the cytoplasmic side; the sequence is VIERID. A helical transmembrane segment spans residues 123-144; that stretch reads DTLALLNLACMMLITFLPYTFS. The Lumenal portion of the chain corresponds to 145–154; the sequence is LMATFPNNIL. The helical transmembrane segment at 155–176 threads the bilayer; the sequence is GILLFCACVMVIGLIQALIVLY. The Cytoplasmic segment spans residues 177 to 200; that stretch reads GFSHPFLLNDQIQMSENQAYYKQH. Transmembrane regions (helical) follow at residues 201–221 and 222–242; these read ILKV…FSFI and FFQL…ISQC. The Cytoplasmic segment spans residues 243 to 274; sequence LKWIRSKAIGGQTDESPDSMPFYTYHPSEPLS. Residues 275-299 form a helical membrane-spanning segment; that stretch reads KERVEAFSDGVFAIVATLLILDICE. A RxxxFSD motif 2 motif is present at residues 277–283; it reads RVEAFSD. The Lumenal portion of the chain corresponds to 300-326; sequence GNVPDPSVVKKKFDNSLIAALQEYGPE. The interval 305–313 is short helix H1-2; the sequence is PSVVKKKFD. The short helix H2-2 stretch occupies residues 315–321; the sequence is SLIAALQ. A helical membrane pass occupies residues 327-349; that stretch reads YLAYFGSFVTVGLLWFVHHSLFL. Topologically, residues 350–355 are cytoplasmic; it reads HVTKAT. The chain crosses the membrane as a helical span at residues 356 to 377; the sequence is RLMGLFNTFSLAFVGGLPLAYQ. Residues 378-392 lie on the Lumenal side of the membrane; that stretch reads LTHESPRGSRNELEA. A helical transmembrane segment spans residues 393–413; the sequence is VQISCVIIFFASLFQLAIWVT. Topologically, residues 414–433 are cytoplasmic; the sequence is ALFTERETLHPYVRYGGREH. The helical transmembrane segment at 434 to 457 threads the bilayer; the sequence is TFMLAKLSLYPCVALGTFFITCIL. The Lumenal segment spans residues 458-459; the sequence is SR. A helical membrane pass occupies residues 460 to 486; it reads FSAPIFHMMEICIPFAFLLLRLLVRVA. The Cytoplasmic segment spans residues 487-520; sequence LALLRWLFCSARNDLERIPVEEEESRLPINDIVT.

This sequence belongs to the TMEM175 family. As to quaternary structure, homodimer.

It localises to the endosome membrane. Its subcellular location is the lysosome membrane. The enzyme catalyses H(+)(in) = H(+)(out). It catalyses the reaction K(+)(in) = K(+)(out). Its activity is regulated as follows. Active at low pH (under pH 4.6): proton channel activity is activated by luminal side protons. Polyunsaturated fatty acids, such as arachidonic acid, also activate the channel activity. Proton-activated proton channel that catalyzes proton efflux from endosomes and lysosomes to maintain a steady-state pH. Activated at low pH (under pH 4.6) by luminal side protons: selectively mediates lysosomal proton release from lysosomes, eliciting a proton leak that balances V-ATPase activity to maintain pH homeostasis. Regulation of lumenal pH stability is required for autophagosome-lysosome fusion. Also acts as a potassium channel at higher pH, regulating potassium conductance in endosomes and lysosomes. The polypeptide is Endosomal/lysosomal proton channel TMEM175 (Danio rerio (Zebrafish)).